A 269-amino-acid chain; its full sequence is Homocitrate synthase subunit alpha (269 aa).

Positions 3 to 255 constitute a Pyruvate carboxyltransferase domain; the sequence is INIVDTTLRD…IYTGDFEDII (253 aa).

This sequence belongs to the alpha-IPM synthase/homocitrate synthase family. As to quaternary structure, heterodimer of an alpha and an omega chain.

It carries out the reaction acetyl-CoA + 2-oxoglutarate + H2O = (2R)-homocitrate + CoA + H(+). Its function is as follows. This protein is a Fe-Mo-cofactor biosynthetic component. The protein is Homocitrate synthase subunit alpha (nifV-ALPHA) of Clostridium pasteurianum.